The sequence spans 525 residues: Glutamate--cysteine ligase (525 aa).

It belongs to the glutamate--cysteine ligase type 1 family. Type 1 subfamily.

It carries out the reaction L-cysteine + L-glutamate + ATP = gamma-L-glutamyl-L-cysteine + ADP + phosphate + H(+). The protein operates within sulfur metabolism; glutathione biosynthesis; glutathione from L-cysteine and L-glutamate: step 1/2. The chain is Glutamate--cysteine ligase from Pseudomonas putida (strain ATCC 47054 / DSM 6125 / CFBP 8728 / NCIMB 11950 / KT2440).